Consider the following 361-residue polypeptide: Protein-L-isoaspartate O-methyltransferase domain-containing protein 2 (361 aa).

Gly2 carries N-myristoyl glycine lipidation. The active site involves Ser64. 3 adoMet binding motif regions span residues 85–94, 160–164, and 181–191; these read LNLGSGTGYL, YDRVY, and LKVGGILVMPL. A BC-box region spans residues 240-250; sequence VRSLQDLARIA. Positions 303–312 are enriched in polar residues; the sequence is SNPSDDNSSG. Residues 303–335 are disordered; that stretch reads SNPSDDNSSGDLEEERREEEATTPPDAKPEPPV. Residues 345 to 348 are CUL-box; the sequence is LPLP.

Belongs to the methyltransferase superfamily. L-isoaspartyl/D-aspartyl protein methyltransferase family.

The protein resides in the cytoplasm. Functionally, may act as a substrate recognition component of an ECS (Elongin BC-CUL5-SOCS-box protein) E3 ubiquitin ligase complex which mediates the ubiquitination and subsequent proteasomal degradation of target proteins. May bind to the methyltransferase cofactor S-adenosylmethionine (AdoMet) via the N-terminal AdoMet binding motif, but probably does not display methyltransferase activity. In Bos taurus (Bovine), this protein is Protein-L-isoaspartate O-methyltransferase domain-containing protein 2 (PCMTD2).